A 911-amino-acid chain; its full sequence is Protein dead ringer (911 aa).

Disordered stretches follow at residues 1–44, 67–87, and 172–274; these read MQLR…DCDS, SGGG…LSHH, and HVTS…QNNG. Basic and acidic residues predominate over residues 19–34; that stretch reads IERDSDLGDDLSHGDR. Ser30 bears the Phosphoserine mark. Thr35 carries the phosphothreonine modification. Ser44 is subject to Phosphoserine. The span at 174 to 201 shows a compositional bias: low complexity; the sequence is TSSPSGGNGSSYNGGTTPTNSSNSNATT. The segment covering 202–231 has biased composition (gly residues); it reads NGGGTAGPGGTGGSGGGGGGGGGGGGGVGG. Positions 252 to 273 are enriched in low complexity; it reads AANSASNSSTSSEASNSSQQNN. The 93-residue stretch at 293–385 folds into the ARID domain; sequence DPKRKEFLDD…YLYPYECEKK (93 aa). 3 disordered regions span residues 501 to 633, 662 to 775, and 826 to 877; these read GMPP…VGSG, PSMG…GKLN, and QSET…DQDM. Residues 512–550 are compositionally biased toward low complexity; it reads HQQQHSQQQQQQQHHHQQQQQQQSQQQHHLQQQRQRSQS. Positions 570–600 are enriched in polar residues; sequence HNNNSPPGSAHTSPQQREALNLSDSPPNLTN. Phosphoserine is present on residues Ser592 and Ser594. A compositionally biased stretch (basic and acidic residues) spans 601-621; the sequence is IKREREREPTPEPVDQDDKFV. Ser720 is modified (phosphoserine). One can recognise an REKLES domain in the interval 731–825; that stretch reads TTGGSVGHRH…GVLVANVPLS (95 aa). Positions 737 to 751 are enriched in basic residues; the sequence is GHRHSSPVSTKKKGG. The segment covering 841–853 has biased composition (acidic residues); the sequence is TVEEEKDEEEEEE. A compositionally biased stretch (basic and acidic residues) spans 854–870; that stretch reads PKAAEEESHRSPVKQEN.

As to expression, present in the pharyngeal muscles, hindgut epithelium, amnioserosa, ring gland, midgut-hindgut junction, posterior region of each brain lobe, longitudinal glial cells of the CNS and the salivary gland duct of germ-band retracted embryos.

The protein resides in the nucleus. Its function is as follows. Transcription factor which is a downstream target of gcm and repo. Directly or indirectly activates the transcription of locos and pros, which are essential for the development of some glial cells. Plays an essential role in defining the cell shape and migration characteristics of longitudinal glia that enable them to establish a normal axon scaffold. The protein is Protein dead ringer (retn) of Drosophila melanogaster (Fruit fly).